The sequence spans 452 residues: MNIFGTDGVRGRANVYPMDPITVLRLGMAIGLEARKVGTQVVLGKDTRISGYMVESALVSGLVAMGVNVGLLGPMPTAAIATLVRNLRASMGVVISASHNSYLDNGVKIFDSEGIKIPLELEEVLESNVRAELSSDLAQVRGMGKVYRIAGAVGRYIEFVKGTFPKRLKLSGMKIVVDCANGAAYHIGGEVFWELGADVVVIGNKPDGLNINHNCGSLHPEGMVQKVLEEGADIGIALDGDADRVVVCDEKGRLVDGDQVIASIMRHLRATKSITDAAVTTMSSKSIDSYARELGVRLHRSEVGDRHLVDTMRRHSCSVGGEKSGHIILWEHSTTSDSLVAALQILSIMLLENKSASSIFGDFVPMPRVHRDIPYSMEFDHIARLIGPTLSDVEQALGRVNGRVIFRRSGTERLIRCVIEGEDPKLVALVADELSIKLRELGVENGVEPEMQ.

Catalysis depends on Ser-98, which acts as the Phosphoserine intermediate. Mg(2+) contacts are provided by Ser-98, Asp-239, Asp-241, and Asp-243. At Ser-98 the chain carries Phosphoserine.

It belongs to the phosphohexose mutase family. The cofactor is Mg(2+). Activated by phosphorylation.

It catalyses the reaction alpha-D-glucosamine 1-phosphate = D-glucosamine 6-phosphate. In terms of biological role, catalyzes the conversion of glucosamine-6-phosphate to glucosamine-1-phosphate. The sequence is that of Phosphoglucosamine mutase from Anaplasma marginale (strain St. Maries).